Reading from the N-terminus, the 134-residue chain is Small ribosomal subunit protein uS8c (134 aa).

The protein belongs to the universal ribosomal protein uS8 family. As to quaternary structure, part of the 30S ribosomal subunit.

Its subcellular location is the plastid. In terms of biological role, one of the primary rRNA binding proteins, it binds directly to 16S rRNA central domain where it helps coordinate assembly of the platform of the 30S subunit. The chain is Small ribosomal subunit protein uS8c (rps8) from Cuscuta gronovii (Common dodder).